The sequence spans 427 residues: Peptidase B (427 aa).

Mn(2+)-binding residues include lysine 195 and aspartate 200. Lysine 207 is a catalytic residue. Mn(2+) contacts are provided by aspartate 218, aspartate 277, and glutamate 279. The active site involves arginine 281.

This sequence belongs to the peptidase M17 family. As to quaternary structure, homohexamer. The cofactor is Mn(2+).

The protein localises to the cytoplasm. The catalysed reaction is Release of an N-terminal amino acid, Xaa, from a peptide or arylamide. Xaa is preferably Glu or Asp but may be other amino acids, including Leu, Met, His, Cys and Gln.. Its function is as follows. Probably plays an important role in intracellular peptide degradation. This chain is Peptidase B, found in Escherichia coli O139:H28 (strain E24377A / ETEC).